A 259-amino-acid polypeptide reads, in one-letter code: MTRREDGRLDDELRPLVITRGFTEHPAGSVLIEFGHTKVMCTASVTEGVPRWRKGSGLGWLTAEYAMLPSATHTRSDRESVKGRLSGRTQEISRLIGRSLRACIDLAALGENTIAVDCDVLQADGGTRTAAITGAFVALADAVTYLSAAGKLSDPRPLSCAIAAVSVGVVDGRIRVDLPYEEDARAEVDMNVVATDTGTLVEVQGTGEGATFPRSTLDKLLDAALAACDKLFAAQREALKLPYPGVLPEGPPPPKVFGS.

Residues R88 and 126-128 (GTR) each bind phosphate.

It belongs to the RNase PH family. Homohexameric ring arranged as a trimer of dimers.

The enzyme catalyses tRNA(n+1) + phosphate = tRNA(n) + a ribonucleoside 5'-diphosphate. In terms of biological role, phosphorolytic 3'-5' exoribonuclease that plays an important role in tRNA 3'-end maturation. Removes nucleotide residues following the 3'-CCA terminus of tRNAs; can also add nucleotides to the ends of RNA molecules by using nucleoside diphosphates as substrates, but this may not be physiologically important. Probably plays a role in initiation of 16S rRNA degradation (leading to ribosome degradation) during starvation. This chain is Ribonuclease PH, found in Mycobacterium avium (strain 104).